We begin with the raw amino-acid sequence, 117 residues long: uncharacterized protein (117 aa).

A run of 2 helical transmembrane segments spans residues 9–29 (ITSH…FIPF) and 56–76 (VIIV…FFIP).

It localises to the membrane. This is an uncharacterized protein from Saccharomyces cerevisiae (strain ATCC 204508 / S288c) (Baker's yeast).